The primary structure comprises 1094 residues: AP-3 complex subunit beta-1 (1094 aa).

Polar residues predominate over residues 1–11 (MSSNSFPYNEQ). Disordered regions lie at residues 1–31 (MSSN…ISPS) and 268–292 (DNGK…KPYT). Phosphoserine occurs at positions 276 and 609. The tract at residues 662 to 811 (PAGKAKQENS…EKKTKQDRTP (150 aa)) is disordered. A compositionally biased stretch (basic and acidic residues) spans 666 to 677 (AKQENSAKKFYS). 2 stretches are compositionally biased toward acidic residues: residues 678–696 (ESEE…ESES) and 705–726 (ESGE…EQDS). Basic and acidic residues-rich tracts occupy residues 727–738 (ESGRESGLENKR) and 748–764 (GKSD…KSKT). Residues S750 and S752 each carry the phosphoserine modification. A compositionally biased stretch (low complexity) spans 765–777 (SDSSNDESSSIED). Positions 778–791 (SSSDSESESEPESE) are enriched in acidic residues. The span at 792-811 (SESRRVTKEKEKKTKQDRTP) shows a compositional bias: basic and acidic residues.

The protein belongs to the adaptor complexes large subunit family. Adaptor protein complex 3 (AP-3) is a heterotetramer composed of two large adaptins (delta-type subunit AP3D1 and beta-type subunit AP3B1 or AP3B2), a medium adaptin (mu-type subunit AP3M1 or AP3M2) and a small adaptin (sigma-type subunit APS1 or AP3S2). AP-3 associates with the BLOC-1 complex. Interacts with KIF3A; interaction is direct; interaction is impaired by pyrophosphorylation of AP3B1. In terms of processing, phosphorylated on serine residues. Pyrophosphorylation by 5-diphosphoinositol pentakisphosphate (5-IP7) impairs interaction with KIF3A. Serine pyrophosphorylation is achieved by Mg(2+)-dependent, but enzyme independent transfer of a beta-phosphate from a inositol pyrophosphate to a pre-phosphorylated serine residue. Ubiquitously expressed.

The protein resides in the cytoplasmic vesicle. It is found in the clathrin-coated vesicle membrane. It localises to the golgi apparatus. Functionally, subunit of non-clathrin- and clathrin-associated adaptor protein complex 3 (AP-3) that plays a role in protein sorting in the late-Golgi/trans-Golgi network (TGN) and/or endosomes. The AP complexes mediate both the recruitment of clathrin to membranes and the recognition of sorting signals within the cytosolic tails of transmembrane cargo molecules. AP-3 appears to be involved in the sorting of a subset of transmembrane proteins targeted to lysosomes and lysosome-related organelles. In concert with the BLOC-1 complex, AP-3 is required to target cargos into vesicles assembled at cell bodies for delivery into neurites and nerve terminals. This chain is AP-3 complex subunit beta-1 (AP3B1), found in Homo sapiens (Human).